Here is a 301-residue protein sequence, read N- to C-terminus: MSETKTYCGFIAIVGRPNVGKSTLLNKLLGQKISITSRKAQTTRHRIVGIHTEGEYQAIYVDTPGLHMEEKRAINRLMNKAASSSIGDVELVIFVVEGTRWTPDDEMVLNKLREGKAPVILAINKVDNVQDKAELLPHLQFLGSQMNFLDIVPISAETGMNVDTIAAIVRKHLPEAIHHFPEDYITDRSQRFMASEIIREKLMRFLGAELPYSVTVEIERFVTNERGGYDINGLILVEREGQKKMVIGNKGAKIKTIGIEARKDMQDMFEAPVHLELWVKVKSGWADDERALRSLGYVDDL.

Residues 7–175 form the Era-type G domain; the sequence is YCGFIAIVGR…AAIVRKHLPE (169 aa). The segment at 15–22 is G1; sequence GRPNVGKS. 15-22 serves as a coordination point for GTP; that stretch reads GRPNVGKS. Positions 41-45 are G2; it reads QTTRH. A G3 region spans residues 62–65; that stretch reads DTPG. GTP contacts are provided by residues 62–66 and 124–127; these read DTPGL and NKVD. A G4 region spans residues 124–127; that stretch reads NKVD. The tract at residues 154–156 is G5; the sequence is ISA. One can recognise a KH type-2 domain in the interval 206 to 283; it reads LGAELPYSVT…HLELWVKVKS (78 aa).

It belongs to the TRAFAC class TrmE-Era-EngA-EngB-Septin-like GTPase superfamily. Era GTPase family. As to quaternary structure, monomer.

Its subcellular location is the cytoplasm. The protein localises to the cell inner membrane. Functionally, an essential GTPase that binds both GDP and GTP, with rapid nucleotide exchange. Plays a role in 16S rRNA processing and 30S ribosomal subunit biogenesis and possibly also in cell cycle regulation and energy metabolism. This Cronobacter sakazakii (strain ATCC BAA-894) (Enterobacter sakazakii) protein is GTPase Era.